Consider the following 985-residue polypeptide: Probable oxidoreductase YjgC (985 aa).

The region spanning 3 to 79 (GKKTITINGV…GDVIDTLSPD (77 aa)) is the 2Fe-2S ferredoxin-type domain. [2Fe-2S] cluster is bound by residues Cys37, Cys48, Cys51, and Cys63. Residues 79 to 119 (DVKKAQVIGMDKILYNHELYCTVCDYNNGGCEIHNTVKEMK) form the 4Fe-4S His(Cys)3-ligated-type domain. [4Fe-4S] cluster is bound by residues His95, Cys99, Cys102, Cys109, Cys148, Cys151, Cys154, Cys158, Cys191, Cys194, Cys197, Cys201, Cys265, Cys268, Cys272, and Cys300. 2 consecutive 4Fe-4S ferredoxin-type domains span residues 139–170 (PFYR…LTID) and 182–211 (NDVP…EKGM). Residues 258-314 (IKKTKTVCTYCGVGCSFDVWTKGRDILKVEPQEEAPANGISTCVKGKFGWDFVNSEE) form the 4Fe-4S Mo/W bis-MGD-type domain.

The protein in the C-terminal section; belongs to the prokaryotic molybdopterin-containing oxidoreductase family. The cofactor is [2Fe-2S] cluster. [4Fe-4S] cluster is required as a cofactor. It depends on Mo-bis(molybdopterin guanine dinucleotide) as a cofactor.

The sequence is that of Probable oxidoreductase YjgC (yjgC) from Bacillus subtilis (strain 168).